Here is a 423-residue protein sequence, read N- to C-terminus: Ankyrin repeat and SAM domain-containing protein 4B (423 aa).

The segment at 1-251 (MSTRYHQAAS…PKDFKEKLHF (251 aa)) is mediates localization to microvilli. 3 ANK repeats span residues 31–60 (DGMT…DPDK), 64–93 (WGNT…NIFA), and 97–126 (DLKS…VQNT). Residues 130–169 (KRVTRLKEQALKNARKQMKECERLQERHQNKMARTYSKED) adopt a coiled-coil conformation. Disordered regions lie at residues 158 to 181 (QNKM…STLS), 207 to 227 (KSKK…SGQR), and 303 to 335 (QRQG…AGDL). Over residues 171 to 181 (GTISSSHSTLS) the composition is skewed to low complexity. Over residues 207-224 (KSKKNKDTTEQLEKDGRS) the composition is skewed to basic and acidic residues. Residues 253–352 (VEEDDDVQHE…EWEEDAVDAT (100 aa)) are mediates interaction with MYO7B. Positions 301–335 (LFQRQGAAGTVEEEEEEEEEEEEEKREANGTAGDL) form a coiled coil. Over residues 311-324 (VEEEEEEEEEEEEE) the composition is skewed to acidic residues. The SAM domain maps to 357–409 (FLQSQHLEEFLPIFMREQIDLEALLLCSDEDLQNIHMQLGPRKKVLSAIDKRK). The PDZ-binding; mediates interaction with USH1C signature appears at 421-423 (TSL).

In terms of assembly, part of the IMAC/intermicrovillar adhesion complex/intermicrovillar tip-link complex composed of ANKS4B, MYO7B, USH1C, CDHR2 and CDHR5. Interacts with USH1C; the interaction is direct and is required for ANKS4B localization to the tip of microvilli. Interacts with MYO7B; the interaction is direct. May interact with HSPA5. In terms of tissue distribution, cochlea, kidney, lung, liver, pancreas, salivary gland and small intestine (at protein level). Expressed in kidney, small intestine, pancreas, liver and colon. Not detected in heart, spleen and brain.

The protein localises to the cell projection. It is found in the microvillus. Functionally, as part of the intermicrovillar adhesion complex/IMAC plays a role in epithelial brush border differentiation, controlling microvilli organization and length. Plays a role in assembly of the complex. May play a role in cellular response to endoplasmic reticulum stress. The chain is Ankyrin repeat and SAM domain-containing protein 4B from Mus musculus (Mouse).